A 242-amino-acid polypeptide reads, in one-letter code: 6-phosphogluconolactonase (242 aa).

The protein belongs to the glucosamine/galactosamine-6-phosphate isomerase family. 6-phosphogluconolactonase subfamily.

It carries out the reaction 6-phospho-D-glucono-1,5-lactone + H2O = 6-phospho-D-gluconate + H(+). The protein operates within carbohydrate degradation; pentose phosphate pathway; D-ribulose 5-phosphate from D-glucose 6-phosphate (oxidative stage): step 2/3. Its function is as follows. Hydrolysis of 6-phosphogluconolactone to 6-phosphogluconate. The protein is 6-phosphogluconolactonase (pgl) of Pseudomonas putida (Arthrobacter siderocapsulatus).